A 390-amino-acid chain; its full sequence is GTPase Obg (390 aa).

The Obg domain maps to 1–159 (MKFVDEATIL…RELMLELLLL (159 aa)). Residues 160–333 (ADVGMLGLPN…LCWDVMNFLN (174 aa)) form the OBG-type G domain. GTP is bound by residues 166–173 (GLPNAGKS), 191–195 (FTTLI), 213–216 (DIPG), 283–286 (NKID), and 314–316 (SAA). Mg(2+)-binding residues include Ser-173 and Thr-193. The span at 363-384 (EVEAEAESEDDDDWDEEDDDGV) shows a compositional bias: acidic residues. The tract at residues 363–390 (EVEAEAESEDDDDWDEEDDDGVEFIYER) is disordered.

The protein belongs to the TRAFAC class OBG-HflX-like GTPase superfamily. OBG GTPase family. As to quaternary structure, monomer. Requires Mg(2+) as cofactor.

It localises to the cytoplasm. In terms of biological role, an essential GTPase which binds GTP, GDP and possibly (p)ppGpp with moderate affinity, with high nucleotide exchange rates and a fairly low GTP hydrolysis rate. Plays a role in control of the cell cycle, stress response, ribosome biogenesis and in those bacteria that undergo differentiation, in morphogenesis control. The chain is GTPase Obg from Yersinia enterocolitica serotype O:8 / biotype 1B (strain NCTC 13174 / 8081).